The chain runs to 533 residues: Probable G-protein coupled receptor Mth-like 14 (533 aa).

The first 23 residues, 1–23, serve as a signal peptide directing secretion; it reads MNLGHWNFLLALISLQTFFNASA. Asparagine 20, asparagine 29, asparagine 30, asparagine 36, and asparagine 47 each carry an N-linked (GlcNAc...) asparagine glycan. Residues 24–242 are Extracellular-facing; that stretch reads QISTVNNSSK…QVEEQIAFAK (219 aa). A disordered region spans residues 86–108; it reads VQSPVDNPLDPADCSQREKYRKQ. The cysteines at positions 120 and 216 are disulfide-linked. 3 N-linked (GlcNAc...) asparagine glycosylation sites follow: asparagine 133, asparagine 178, and asparagine 206. A helical transmembrane segment spans residues 243–263; the sequence is VVFVAVLMLISMPCLLLVSYL. The Cytoplasmic segment spans residues 264-279; the sequence is HMTLRLLRNLHGLSLS. Residues 280–300 form a helical membrane-spanning segment; that stretch reads LMSLCLASGYFVHSVVHIYGI. The Extracellular segment spans residues 301 to 303; sequence PNQ. Residues 304-324 traverse the membrane as a helical segment; sequence GFIGYVIQFCILSYFFWYLCI. The Cytoplasmic segment spans residues 325–347; it reads CFNVLLNVWYKLPCCIQCSKSWA. The helical transmembrane segment at 348 to 368 threads the bilayer; the sequence is TFNFACYAVFAFSGPATIVAL. Over 369-395 the chain is Extracellular; the sequence is TVQKGLPGMPSYFLQGLTESIRDSQRY. The chain crosses the membrane as a helical span at residues 396 to 416; it reads FIPPVSTILFLSFLLNIISFF. The Cytoplasmic portion of the chain corresponds to 417 to 451; sequence GFQRISGYAKAEKNIQERKCLFDQQKYEDVKKDAK. Residues 452–472 traverse the membrane as a helical segment; sequence CVSLLGIIMVVSWLLEIITFY. Residues 473–480 lie on the Extracellular side of the membrane; sequence SGSNSNYL. A helical membrane pass occupies residues 481 to 501; the sequence is ILCDMVNGLQGVWVLLIFLVV. At 502 to 533 the chain is on the cytoplasmic side; that stretch reads RRRRTIILRWWYDRGSHEIEGTELQALSNSPT.

The protein belongs to the G-protein coupled receptor 2 family. Mth subfamily.

It is found in the cell membrane. This chain is Probable G-protein coupled receptor Mth-like 14 (mthl14), found in Drosophila melanogaster (Fruit fly).